The following is a 472-amino-acid chain: WD repeat-containing protein 88 (472 aa).

The disordered stretch occupies residues 1-22; it reads MASPPRCSPTAHDRECKLPPPS. WD repeat units follow at residues 100–139, 143–182, 184–224, 228–267, 271–310, 319–358, and 361–400; these read GHEH…VVRD, RPKA…LLWK, RYDT…TVSV, HHTR…TLLT, AHSN…FRNC, GHEG…RKLS, and GHND…EIPL. A disordered region spans residues 447–472; the sequence is LPADTSSSSSSSERENSPPPRGSKDD. A compositionally biased stretch (basic and acidic residues) spans 458 to 472; that stretch reads SERENSPPPRGSKDD.

This Homo sapiens (Human) protein is WD repeat-containing protein 88 (WDR88).